Reading from the N-terminus, the 706-residue chain is Probable cyclic nucleotide-gated ion channel 3 (706 aa).

Residues 1–85 (MMNPQRNKFV…NDSYLQSWNK (85 aa)) lie on the Cytoplasmic side of the membrane. A helical transmembrane segment spans residues 86–106 (IFLLLSVVALAFDPLFFYIPY). Topologically, residues 107–119 (VKPERFCLNLDKK) are extracellular. Residues 120-140 (LQTIACVFRTFIDAFYVVHML) traverse the membrane as a helical segment. Residues 141-174 (FQFHTGFITPSSSGFGRGELNEKHKDIALRYLGS) lie on the Cytoplasmic side of the membrane. Residues 175–195 (YFLIDLLSILPIPQVVVLAIV) traverse the membrane as a helical segment. The Extracellular portion of the chain corresponds to 196-208 (PRMRRPASLVAKE). Residues 209–229 (LLKWVIFCQYVPRIARIYPLF) traverse the membrane as a helical segment. Topologically, residues 230 to 247 (KEVTRTSGLVTETAWAGA) are cytoplasmic. The helical transmembrane segment at 248–268 (ALNLFLYMLASHVFGSFWYLI) threads the bilayer. Residues 269 to 371 (SIERKDRCWR…QNLKTSAFEG (103 aa)) lie on the Extracellular side of the membrane. The chain crosses the membrane as a helical span at residues 372-392 (EIIFAIVICISGLVLFALLIG). Over 393-706 (NMQKYLQSTT…ADPEFPMDET (314 aa)) the chain is Cytoplasmic. Residues 477-600 (WFQA…KQLR) and D548 contribute to the a nucleoside 3',5'-cyclic phosphate site. The interval 591–606 (YRRLHSKQLRHMFRFY) is calmodulin-binding. One can recognise an IQ domain in the interval 611-640 (QTWAACFIQAAWKRHCRRKLSKALREEEGK).

It belongs to the cyclic nucleotide-gated cation channel (TC 1.A.1.5) family. As to quaternary structure, homotetramer or heterotetramer.

The protein resides in the cell membrane. Its function is as follows. Probable cyclic nucleotide-gated ion channel. This Arabidopsis thaliana (Mouse-ear cress) protein is Probable cyclic nucleotide-gated ion channel 3 (CNGC3).